A 936-amino-acid polypeptide reads, in one-letter code: Calcium homeostasis endoplasmic reticulum protein (936 aa).

Met1 bears the N-acetylmethionine mark. The stretch at 15–57 (VIDKLAQFVARNGPEFEKMTMEKQKDNPKFSFLFGGEFYSYYK) is one SURP motif repeat. Lys18 is subject to N6-acetyllysine. A disordered region spans residues 77–102 (EPTSAMPPLPQPPLAPTASLTPAQGT). A compositionally biased stretch (pro residues) spans 81–91 (AMPPLPQPPLA). A CID domain is found at 149-289 (ETQLDMSEFD…QLQSPALGLG (141 aa)). A disordered region spans residues 328-646 (LAQQQQQQQQ…RQGPPHINHD (319 aa)). Over residues 330 to 355 (QQQQQQQQQQQQQPQPQPQPQIQLPQ) the composition is skewed to low complexity. The segment covering 363 to 383 (TPPPPAPPPASAPAPTIPPTT) has biased composition (pro residues). Residues 395–405 (PGSSEYDTSAG) are compositionally biased toward polar residues. Residues 488 to 500 (PWNNQPDPNWNNQ) show a composition bias toward low complexity. The span at 534 to 550 (PFPPHQQHPQFNQPPHP) shows a compositional bias: pro residues. Low complexity predominate over residues 551–560 (HNFNRFPPRF). A compositionally biased stretch (basic and acidic residues) spans 561-572 (MQDDFPPRHPFE). Residues 594-603 (PHHHPGHRMP) are compositionally biased toward basic residues. Residue Tyr723 is modified to Phosphotyrosine. The segment at 731–887 (RARRRKGQEK…DPIKGGDVRD (157 aa)) is disordered. Over residues 748 to 758 (SRSRSKSRGRS) the composition is skewed to basic residues. A compositionally biased stretch (low complexity) spans 759–773 (SSRSSSRSSKSSRSS). Residues 774 to 824 (SRSHSRSRSRSSSRSRSRSRSRSRSSRSRSRSRSRSRSKSYSPGRRRRSRS) are compositionally biased toward basic residues. Phosphoserine is present on residues Ser822, Ser824, and Ser826. Thr828 carries the post-translational modification Phosphothreonine. A Phosphoserine modification is found at Ser837. A G-patch domain is found at 850-900 (EENKGHQMLVKMGWSGSGGLGAKEQGIQDPIKGGDVRDKWDQYKGVGVALD). Lys853 participates in a covalent cross-link: Glycyl lysine isopeptide (Lys-Gly) (interchain with G-Cter in SUMO2). 2 positions are modified to phosphoserine: Ser864 and Ser866. A Glycyl lysine isopeptide (Lys-Gly) (interchain with G-Cter in SUMO2) cross-link involves residue Lys881. Lys888 carries the post-translational modification N6-acetyllysine. The residue at position 913 (Ser913) is a Phosphoserine.

Its subcellular location is the cytoplasm. It is found in the perinuclear region. The protein localises to the endoplasmic reticulum. Its function is as follows. Involved in calcium homeostasis, growth and proliferation. This is Calcium homeostasis endoplasmic reticulum protein from Mus musculus (Mouse).